The chain runs to 59 residues: Potassium channel toxin alpha-KTx 16.2 (59 aa).

An N-terminal signal peptide occupies residues 1 to 22 (MKIFSILLVALIICSISICTEA). 3 disulfides stabilise this stretch: C30/C51, C36/C56, and C40/C58.

Belongs to the short scorpion toxin superfamily. Potassium channel inhibitor family. Alpha-KTx 16 subfamily. In terms of tissue distribution, expressed by the venom gland.

It is found in the secreted. Its function is as follows. Alpha-KTx 16.2: inhibits large conductance calcium-activated potassium channels (KCa1.1/Slo-beta4 KCNMA1/KCNMB4). It appears to block channel activity by a simple bimolecular inhibition process. Shows a fast association rate and a slow dissociation rate of binding on rat brain synaptosome. Significantly inhibits voltage-dependent sodium current and voltage-dependent delayed rectifier potassium currents. In terms of biological role, significantly inhibits voltage-dependent sodium current (Nav) and voltage-dependent delayed rectifier potassium current. The sequence is that of Potassium channel toxin alpha-KTx 16.2 from Olivierus martensii (Manchurian scorpion).